We begin with the raw amino-acid sequence, 635 residues long: Sodium-dependent multivitamin transporter (635 aa).

3 consecutive transmembrane segments (helical) span residues Phe-24–Leu-44, Cys-68–Val-88, and Phe-101–Phe-121. A glycan (N-linked (GlcNAc...) asparagine) is linked at Asn-138. Helical transmembrane passes span Val-143–Ala-163, Leu-176–Leu-196, Val-199–Ile-219, Phe-256–Ala-276, Val-297–Ala-317, Phe-336–Ile-356, Ile-396–Ile-416, Ile-428–Phe-448, and Ala-456–Val-476. 2 N-linked (GlcNAc...) asparagine glycosylation sites follow: Asn-489 and Asn-498. The helical transmembrane segment at Leu-528 to Leu-548 threads the bilayer.

Belongs to the sodium:solute symporter (SSF) (TC 2.A.21) family. As to quaternary structure, interacts with PDZD11. May be glycosylated. In terms of tissue distribution, expressed in microvessels of the brain (at protein level). Expressed in heart, brain, placenta, lung, liver, skeletal muscle, kidney, and pancreas.

It is found in the cell membrane. It localises to the apical cell membrane. The catalysed reaction is biotin(out) + 2 Na(+)(out) = biotin(in) + 2 Na(+)(in). It catalyses the reaction (R)-pantothenate(out) + 2 Na(+)(out) = (R)-pantothenate(in) + 2 Na(+)(in). It carries out the reaction (R)-lipoate(out) + 2 Na(+)(out) = (R)-lipoate(in) + 2 Na(+)(in). The enzyme catalyses iodide(out) + 2 Na(+)(out) = iodide(in) + 2 Na(+)(in). Functionally, sodium-dependent multivitamin transporter that mediates the electrogenic transport of pantothenate, biotin, lipoate and iodide. Functions as a Na(+)-coupled substrate symporter where the stoichiometry of Na(+):substrate is 2:1, creating an electrochemical Na(+) gradient used as driving force for substrate uptake. Required for biotin and pantothenate uptake in the intestine across the brush border membrane. Plays a role in the maintenance of intestinal mucosa integrity, by providing the gut mucosa with biotin. Contributes to the luminal uptake of biotin and pantothenate into the brain across the blood-brain barrier. This Homo sapiens (Human) protein is Sodium-dependent multivitamin transporter.